A 185-amino-acid polypeptide reads, in one-letter code: Threonylcarbamoyl-AMP synthase (185 aa).

The 185-residue stretch at Met-1–Gly-185 folds into the YrdC-like domain.

The protein belongs to the SUA5 family. TsaC subfamily.

Its subcellular location is the cytoplasm. The enzyme catalyses L-threonine + hydrogencarbonate + ATP = L-threonylcarbamoyladenylate + diphosphate + H2O. Functionally, required for the formation of a threonylcarbamoyl group on adenosine at position 37 (t(6)A37) in tRNAs that read codons beginning with adenine. Catalyzes the conversion of L-threonine, HCO(3)(-)/CO(2) and ATP to give threonylcarbamoyl-AMP (TC-AMP) as the acyladenylate intermediate, with the release of diphosphate. The sequence is that of Threonylcarbamoyl-AMP synthase from Aliivibrio fischeri (strain ATCC 700601 / ES114) (Vibrio fischeri).